We begin with the raw amino-acid sequence, 200 residues long: Sorting nexin-10 (200 aa).

Positions 8–125 are required for interaction with ATP6V1D; the sequence is EEFVSVWVRD…SLHLFLQSHL (118 aa). One can recognise a PX domain in the interval 10–127; that stretch reads FVSVWVRDPR…HLFLQSHLNS (118 aa). A 1,2-diacyl-sn-glycero-3-phospho-(1D-myo-inositol-3-phosphate) contacts are provided by Arg53, Lys79, and Arg94. Residues 156–167 are compositionally biased toward basic and acidic residues; sequence FPEEEEGKKEND. A disordered region spans residues 156-200; it reads FPEEEEGKKENDIDYDSESSSSGFGHSSDDSSSHGCKMSTAPQES.

This sequence belongs to the sorting nexin family. Interacts with ATP6V1D; may play a role in ciliogenesis.

It localises to the cytoplasm. The protein resides in the endosome membrane. Its subcellular location is the cytoskeleton. The protein localises to the microtubule organizing center. It is found in the centrosome. Its function is as follows. Probable phosphoinositide-binding protein involved in protein sorting and membrane trafficking in endosomes. Plays a role in cilium biogenesis through regulation of the transport and the localization of proteins to the cilium. Required for the localization to the cilium of V-ATPase subunit ATP6V1D and ATP6V0D1, and RAB8A. Involved in osteoclast differentiation and therefore bone resorption. The sequence is that of Sorting nexin-10 (SNX10) from Bos taurus (Bovine).